The following is a 278-amino-acid chain: Dermonecrotic toxin LhSicTox-alphaIV1iii (278 aa).

H5 is a catalytic residue. Residues E25 and D27 each coordinate Mg(2+). H41 functions as the Nucleophile in the catalytic mechanism. 2 cysteine pairs are disulfide-bonded: C45/C51 and C47/C192. Residue D85 coordinates Mg(2+).

This sequence belongs to the arthropod phospholipase D family. Class II subfamily. Mg(2+) serves as cofactor. As to expression, expressed by the venom gland.

The protein localises to the secreted. The enzyme catalyses an N-(acyl)-sphingosylphosphocholine = an N-(acyl)-sphingosyl-1,3-cyclic phosphate + choline. It carries out the reaction an N-(acyl)-sphingosylphosphoethanolamine = an N-(acyl)-sphingosyl-1,3-cyclic phosphate + ethanolamine. The catalysed reaction is a 1-acyl-sn-glycero-3-phosphocholine = a 1-acyl-sn-glycero-2,3-cyclic phosphate + choline. It catalyses the reaction a 1-acyl-sn-glycero-3-phosphoethanolamine = a 1-acyl-sn-glycero-2,3-cyclic phosphate + ethanolamine. In terms of biological role, dermonecrotic toxins cleave the phosphodiester linkage between the phosphate and headgroup of certain phospholipids (sphingolipid and lysolipid substrates), forming an alcohol (often choline) and a cyclic phosphate. This toxin acts on sphingomyelin (SM). It may also act on ceramide phosphoethanolamine (CPE), lysophosphatidylcholine (LPC) and lysophosphatidylethanolamine (LPE), but not on lysophosphatidylserine (LPS), and lysophosphatidylglycerol (LPG). It acts by transphosphatidylation, releasing exclusively cyclic phosphate products as second products. Induces dermonecrosis, hemolysis, increased vascular permeability, edema, inflammatory response, and platelet aggregation. The polypeptide is Dermonecrotic toxin LhSicTox-alphaIV1iii (Loxosceles hirsuta (Recluse spider)).